The primary structure comprises 159 residues: NADH-quinone oxidoreductase subunit B (159 aa).

4 residues coordinate [4Fe-4S] cluster: cysteine 32, cysteine 33, cysteine 97, and cysteine 126.

It belongs to the complex I 20 kDa subunit family. As to quaternary structure, NDH-1 is composed of 14 different subunits. Subunits NuoB, C, D, E, F, and G constitute the peripheral sector of the complex. Requires [4Fe-4S] cluster as cofactor.

The protein resides in the cell inner membrane. It carries out the reaction a quinone + NADH + 5 H(+)(in) = a quinol + NAD(+) + 4 H(+)(out). Functionally, NDH-1 shuttles electrons from NADH, via FMN and iron-sulfur (Fe-S) centers, to quinones in the respiratory chain. The immediate electron acceptor for the enzyme in this species is believed to be ubiquinone. Couples the redox reaction to proton translocation (for every two electrons transferred, four hydrogen ions are translocated across the cytoplasmic membrane), and thus conserves the redox energy in a proton gradient. This Helicobacter acinonychis (strain Sheeba) protein is NADH-quinone oxidoreductase subunit B.